Here is a 438-residue protein sequence, read N- to C-terminus: ATP-dependent protease ATPase subunit HslU (438 aa).

ATP contacts are provided by residues Val-18, 60–65 (GVGKTE), Asp-252, Glu-317, and Arg-389.

Belongs to the ClpX chaperone family. HslU subfamily. A double ring-shaped homohexamer of HslV is capped on each side by a ring-shaped HslU homohexamer. The assembly of the HslU/HslV complex is dependent on binding of ATP.

Its subcellular location is the cytoplasm. In terms of biological role, ATPase subunit of a proteasome-like degradation complex; this subunit has chaperone activity. The binding of ATP and its subsequent hydrolysis by HslU are essential for unfolding of protein substrates subsequently hydrolyzed by HslV. HslU recognizes the N-terminal part of its protein substrates and unfolds these before they are guided to HslV for hydrolysis. This chain is ATP-dependent protease ATPase subunit HslU, found in Saccharophagus degradans (strain 2-40 / ATCC 43961 / DSM 17024).